Here is a 352-residue protein sequence, read N- to C-terminus: MTEHKRRATPPYHQDPDVTALESLPARQQQVLQATVHHYVDTIEPVGSKTLVQRFGLKASAATVRSAMGALEQRGLLTQPHTSAGRVPSPQGYRHYVDCLLPPPGSAAQHLERELTNLSLRWAALDDLMWQLARRLTDFTGLMSLITRPARPKPTLQAVRLVRSGDRLLVMLVESSNQASHLNLRLPHEASNELEAIEEWTRDQLATTGNGSLDWSSLPPQLNLSGSLLREAIHSHSQAQTPAESDAVFHGMSRLLAQPEFSSSASLQPLLELMDTQPAAVVPVGSEQLGGVWIGAEHPKSALEACSVVQAPYHSSGEGIGQVALVGPMRMAYATAKAAVSSVANHLERLLC.

The protein belongs to the HrcA family.

In terms of biological role, negative regulator of class I heat shock genes (grpE-dnaK-dnaJ and groELS operons). Prevents heat-shock induction of these operons. This is Heat-inducible transcription repressor HrcA from Prochlorococcus marinus (strain MIT 9313).